The chain runs to 207 residues: Protein GrpE (207 aa).

2 stretches are compositionally biased toward basic and acidic residues: residues 1-11 and 57-66; these read MEENRDVKNEE and DLVKNQEEEN. The interval 1-66 is disordered; it reads MEENRDVKNE…DLVKNQEEEN (66 aa).

This sequence belongs to the GrpE family. Homodimer.

Its subcellular location is the cytoplasm. Functionally, participates actively in the response to hyperosmotic and heat shock by preventing the aggregation of stress-denatured proteins, in association with DnaK and GrpE. It is the nucleotide exchange factor for DnaK and may function as a thermosensor. Unfolded proteins bind initially to DnaJ; upon interaction with the DnaJ-bound protein, DnaK hydrolyzes its bound ATP, resulting in the formation of a stable complex. GrpE releases ADP from DnaK; ATP binding to DnaK triggers the release of the substrate protein, thus completing the reaction cycle. Several rounds of ATP-dependent interactions between DnaJ, DnaK and GrpE are required for fully efficient folding. In Clostridium beijerinckii (strain ATCC 51743 / NCIMB 8052) (Clostridium acetobutylicum), this protein is Protein GrpE.